The chain runs to 458 residues: UPF0210 protein MmarC6_1246 (458 aa).

This sequence belongs to the UPF0210 family.

This chain is UPF0210 protein MmarC6_1246, found in Methanococcus maripaludis (strain C6 / ATCC BAA-1332).